A 251-amino-acid polypeptide reads, in one-letter code: Imidazole glycerol phosphate synthase subunit HisF (251 aa).

Residues Asp11 and Asp130 contribute to the active site.

The protein belongs to the HisA/HisF family. In terms of assembly, heterodimer of HisH and HisF.

It localises to the cytoplasm. The catalysed reaction is 5-[(5-phospho-1-deoxy-D-ribulos-1-ylimino)methylamino]-1-(5-phospho-beta-D-ribosyl)imidazole-4-carboxamide + L-glutamine = D-erythro-1-(imidazol-4-yl)glycerol 3-phosphate + 5-amino-1-(5-phospho-beta-D-ribosyl)imidazole-4-carboxamide + L-glutamate + H(+). The protein operates within amino-acid biosynthesis; L-histidine biosynthesis; L-histidine from 5-phospho-alpha-D-ribose 1-diphosphate: step 5/9. Functionally, IGPS catalyzes the conversion of PRFAR and glutamine to IGP, AICAR and glutamate. The HisF subunit catalyzes the cyclization activity that produces IGP and AICAR from PRFAR using the ammonia provided by the HisH subunit. The sequence is that of Imidazole glycerol phosphate synthase subunit HisF from Chlorobaculum tepidum (strain ATCC 49652 / DSM 12025 / NBRC 103806 / TLS) (Chlorobium tepidum).